The following is a 247-amino-acid chain: MIDPIEQFHLNKIFTIGHIGNQEIAFTTSSAYMLLAVVLIAAMMLGAGRALVPGRFQSVVELAYEFVANTIRTSAGSHGMTFFPLVFSLFMFIFVSNIVGIIPYTFTVSSHIIVTFSLALLVFLTVIIYGFYKNGLKFFKLFVPSGIPAVILPLVVIIEIISFFSRPISHSVRLFANMLAGHVTLKVFASFVTMLGALGFVGKVGALLPLGLTVALTGLELMVAFLQAYVFTILTCIYLNDAIHPGH.

The next 6 membrane-spanning stretches (helical) occupy residues 24 to 44, 82 to 102, 112 to 132, 141 to 161, 181 to 201, and 206 to 226; these read IAFT…AAMM, FFPL…VGII, IIVT…YGFY, LFVP…IEII, GHVT…LGFV, and ALLP…VAFL.

Belongs to the ATPase A chain family. In terms of assembly, F-type ATPases have 2 components, CF(1) - the catalytic core - and CF(0) - the membrane proton channel. CF(1) has five subunits: alpha(3), beta(3), gamma(1), delta(1), epsilon(1). CF(0) has four main subunits: a, b, b' and c.

The protein resides in the cell inner membrane. Key component of the proton channel; it plays a direct role in the translocation of protons across the membrane. The protein is ATP synthase subunit a of Bradyrhizobium sp. (strain ORS 278).